The following is an 89-amino-acid chain: NADH-ubiquinone oxidoreductase chain 4L (89 aa).

3 consecutive transmembrane segments (helical) span residues 1 to 21, 22 to 42, and 57 to 77; these read MNIT…NRKN, IILM…LILV, and IYII…LVAF.

This sequence belongs to the complex I subunit 4L family.

It localises to the mitochondrion membrane. It catalyses the reaction a ubiquinone + NADH + 5 H(+)(in) = a ubiquinol + NAD(+) + 4 H(+)(out). In terms of biological role, core subunit of the mitochondrial membrane respiratory chain NADH dehydrogenase (Complex I) that is believed to belong to the minimal assembly required for catalysis. Complex I functions in the transfer of electrons from NADH to the respiratory chain. The immediate electron acceptor for the enzyme is believed to be ubiquinone. The sequence is that of NADH-ubiquinone oxidoreductase chain 4L (ndh-4L) from Neurospora crassa (strain ATCC 24698 / 74-OR23-1A / CBS 708.71 / DSM 1257 / FGSC 987).